The sequence spans 415 residues: D-threonate kinase (415 aa).

Substrate is bound by residues Asp9, Arg53, and 81–84 (KIDS). ATP is bound by residues Ser251, 345–348 (GGET), and Gly392.

This sequence belongs to the four-carbon acid sugar kinase family.

The enzyme catalyses D-threonate + ATP = 4-O-phospho-D-threonate + ADP + H(+). In terms of biological role, catalyzes the ATP-dependent phosphorylation of D-threonate to D-threonate 4-phosphate. Can also phosphorylate 4-hydroxy-L-threonine, with lower efficiency. This is D-threonate kinase from Cupriavidus necator (strain ATCC 17699 / DSM 428 / KCTC 22496 / NCIMB 10442 / H16 / Stanier 337) (Ralstonia eutropha).